A 255-amino-acid polypeptide reads, in one-letter code: NAD-dependent protein deacylase (255 aa).

Residues M1–S253 form the Deacetylase sirtuin-type domain. G22 to W42 is a binding site for NAD(+). Substrate-binding residues include Y67 and R70. Q101–D104 is a binding site for NAD(+). The Proton acceptor role is filled by H119. Residues C127, C130, C155, and C158 each coordinate Zn(2+). NAD(+)-binding positions include G195–S197, N221–A223, and A239.

It belongs to the sirtuin family. Class III subfamily. Requires Zn(2+) as cofactor.

It is found in the cytoplasm. It carries out the reaction N(6)-acetyl-L-lysyl-[protein] + NAD(+) + H2O = 2''-O-acetyl-ADP-D-ribose + nicotinamide + L-lysyl-[protein]. It catalyses the reaction N(6)-succinyl-L-lysyl-[protein] + NAD(+) + H2O = 2''-O-succinyl-ADP-D-ribose + nicotinamide + L-lysyl-[protein]. Its function is as follows. NAD-dependent lysine deacetylase and desuccinylase that specifically removes acetyl and succinyl groups on target proteins. Modulates the activities of several proteins which are inactive in their acylated form. In Methylococcus capsulatus (strain ATCC 33009 / NCIMB 11132 / Bath), this protein is NAD-dependent protein deacylase.